The sequence spans 860 residues: Protein argonaute-3 (860 aa).

Positions 230-349 constitute a PAZ domain; that stretch reads PVIQFMCEVL…LPLEVCNIVA (120 aa). Residues 518–819 form the Piwi domain; that stretch reads LIIVILPGKT…VAFRARYHLV (302 aa). Residues 530–567 form an interaction with guide RNA region; sequence YAEVKRAGDTLLGMATQCVQVKNVIKTSPQTLSNLCLK. Residues aspartate 598, glutamate 638, and aspartate 670 each contribute to the a divalent metal cation site. Positions 758-805 are interaction with guide RNA; sequence QGTSRPSHYHVLWDDNCFTADELQLLTYQLCHTYVRCTRSVSIPAPAY. Histidine 808 lines the a divalent metal cation pocket.

This sequence belongs to the argonaute family. Ago subfamily.

It localises to the cytoplasm. Its subcellular location is the P-body. The enzyme catalyses Endonucleolytic cleavage to 5'-phosphomonoester.. Its function is as follows. Required for RNA-mediated gene silencing (RNAi). Binds to short RNAs such as microRNAs (miRNAs) and represses the translation of mRNAs which are complementary to them. Possesses RNA slicer activity but only on select RNAs bearing 5'- and 3'-flanking sequences to the region of guide-target complementarity. This Gallus gallus (Chicken) protein is Protein argonaute-3 (AGO3).